Here is a 259-residue protein sequence, read N- to C-terminus: Type III pantothenate kinase (259 aa).

6-13 (DVGNTNCT) is a binding site for ATP. 107–110 (GSDR) lines the substrate pocket. Catalysis depends on Asp-109, which acts as the Proton acceptor. Asp-129 contributes to the K(+) binding site. Thr-132 is a binding site for ATP. Thr-184 lines the substrate pocket.

The protein belongs to the type III pantothenate kinase family. As to quaternary structure, homodimer. It depends on NH4(+) as a cofactor. Requires K(+) as cofactor.

Its subcellular location is the cytoplasm. It catalyses the reaction (R)-pantothenate + ATP = (R)-4'-phosphopantothenate + ADP + H(+). The protein operates within cofactor biosynthesis; coenzyme A biosynthesis; CoA from (R)-pantothenate: step 1/5. In terms of biological role, catalyzes the phosphorylation of pantothenate (Pan), the first step in CoA biosynthesis. This chain is Type III pantothenate kinase, found in Listeria monocytogenes serovar 1/2a (strain ATCC BAA-679 / EGD-e).